The following is a 465-amino-acid chain: Ribulose bisphosphate carboxylase large chain (465 aa).

Lys4 is subject to N6,N6,N6-trimethyllysine. The substrate site is built by Asn113 and Thr163. Catalysis depends on Lys165, which acts as the Proton acceptor. Residue Lys167 coordinates substrate. The Mg(2+) site is built by Lys191, Asp193, and Glu194. Lys191 is subject to N6-carboxylysine. The active-site Proton acceptor is the His284. 3 residues coordinate substrate: Arg285, His317, and Ser369.

Belongs to the RuBisCO large chain family. Type I subfamily. In terms of assembly, heterohexadecamer of 8 large chains and 8 small chains; disulfide-linked. The disulfide link is formed within the large subunit homodimers. The cofactor is Mg(2+). In terms of processing, the disulfide bond which can form in the large chain dimeric partners within the hexadecamer appears to be associated with oxidative stress and protein turnover.

The protein resides in the plastid. It localises to the chloroplast. The enzyme catalyses 2 (2R)-3-phosphoglycerate + 2 H(+) = D-ribulose 1,5-bisphosphate + CO2 + H2O. It carries out the reaction D-ribulose 1,5-bisphosphate + O2 = 2-phosphoglycolate + (2R)-3-phosphoglycerate + 2 H(+). RuBisCO catalyzes two reactions: the carboxylation of D-ribulose 1,5-bisphosphate, the primary event in carbon dioxide fixation, as well as the oxidative fragmentation of the pentose substrate in the photorespiration process. Both reactions occur simultaneously and in competition at the same active site. The sequence is that of Ribulose bisphosphate carboxylase large chain from Cassia fistula (Golden shower tree).